Here is a 637-residue protein sequence, read N- to C-terminus: Dihydrolipoyllysine-residue acetyltransferase component of pyruvate dehydrogenase complex, mitochondrial (637 aa).

A mitochondrion-targeting transit peptide spans 1–85 (MWRVCVRRAQ…LLGSPGRRSY (85 aa)). Residues 80–100 (PGRRSYSLPPHQKVPLPSLSP) are disordered. The region spanning 90–166 (HQKVPLPSLS…PIGSIICITV (77 aa)) is the Lipoyl-binding 1 domain. Ser99 is subject to Phosphoserine. Position 131 is an N6-lipoyllysine (Lys131). 2 disordered regions span residues 189–219 (QAAAPTPAPAPCAAPTAPSAKAPGSSYPPHM) and 307–340 (LKPQAPPPVPPPVAAAPPTAQPLAPTPSGLPAGP). Positions 201-211 (AAPTAPSAKAP) are enriched in low complexity. Positions 218 to 287 (HMQVSAVGEQ…PLGAPLCIIV (70 aa)) constitute a Lipoyl-binding 2 domain. The segment covering 310–321 (QAPPPVPPPVAA) has biased composition (pro residues). Residues 322–333 (APPTAQPLAPTP) show a composition bias toward low complexity. The 38-residue stretch at 345-382 (FVSPLAKKLAAERGIDLTQVKGTGPEGRIIKKDIDSFV) folds into the Peripheral subunit-binding (PSBD) domain. CoA is bound at residue Arg451. At Lys456 the chain carries N6-acetyllysine. Lys463 is modified (N6-succinyllysine). Ser465 provides a ligand contact to CoA. Lys537 bears the N6-succinyllysine mark. Ser556, Asn557, and Gly581 together coordinate CoA. Catalysis depends on residues His610 and Asp614.

Belongs to the 2-oxoacid dehydrogenase family. As to quaternary structure, part of the pyruvate dehydrogenase complex (PDHc) that is a multi-enzyme complex composed of multiple copies of three enzymes, pyruvate dehydrogenase (subunits PDH1A and PDHB, E1 component), dihydrolipoamide acetyltransferase (DLAT, E2 component), and dihydrolipoamide dehydrogenase (DLD, E3 component) to which is added an additional protein the E3-binding protein (PDHX, E3BP). In terms of structural architecture, the E2 and E3BP components assemble into a 60meric central core with icosahedral symmetry. The central core is decorated with E1 and E3 proteins. Currently, two alternative models for the E2:E3BP stoichiometry are considered as being either 48:12 (E2(48)-E3BP(12)) or 40:20 (E2(40)-E3BP(20)). Interacts with PDK2 and PDK3. Interacts with SIRT4. Interacts with PDHB. The cofactor is (R)-lipoate. Post-translationally, delipoylated at Lys-131 by SIRT4, delipoylation decreases the PHD complex activity. As to expression, detected at higher levels in cauda epididymal spermatazoa than in caput epididymal spermatazoa (at protein level).

The protein resides in the mitochondrion matrix. The catalysed reaction is N(6)-[(R)-dihydrolipoyl]-L-lysyl-[protein] + acetyl-CoA = N(6)-[(R)-S(8)-acetyldihydrolipoyl]-L-lysyl-[protein] + CoA. Functionally, as part of the pyruvate dehydrogenase complex, catalyzes the transfers of an acetyl group to a lipoic acid moiety. The pyruvate dehydrogenase complex, catalyzes the overall conversion of pyruvate to acetyl-CoA and CO(2), and thereby links cytoplasmic glycolysis and the mitochondrial tricarboxylic acid (TCA) cycle. This Mesocricetus auratus (Golden hamster) protein is Dihydrolipoyllysine-residue acetyltransferase component of pyruvate dehydrogenase complex, mitochondrial.